The sequence spans 199 residues: Recombination protein RecR (199 aa).

A C4-type zinc finger spans residues 58–73; the sequence is CQTCRILSETDLCSLC. The region spanning 81-176 is the Toprim domain; that stretch reads GQLCVVEMPS…TTTRIAHGVP (96 aa).

It belongs to the RecR family.

Functionally, may play a role in DNA repair. It seems to be involved in an RecBC-independent recombinational process of DNA repair. It may act with RecF and RecO. The protein is Recombination protein RecR of Nitrosococcus oceani (strain ATCC 19707 / BCRC 17464 / JCM 30415 / NCIMB 11848 / C-107).